The following is an 88-amino-acid chain: Small ribosomal subunit protein bS16 (88 aa).

The protein belongs to the bacterial ribosomal protein bS16 family.

The polypeptide is Small ribosomal subunit protein bS16 (Geobacter sulfurreducens (strain ATCC 51573 / DSM 12127 / PCA)).